Here is a 132-residue protein sequence, read N- to C-terminus: L-ectoine synthase (132 aa).

This sequence belongs to the ectoine synthase family.

The catalysed reaction is (2S)-4-acetamido-2-aminobutanoate = L-ectoine + H2O. The protein operates within amine and polyamine biosynthesis; ectoine biosynthesis; L-ectoine from L-aspartate 4-semialdehyde: step 3/3. Its function is as follows. Catalyzes the circularization of gamma-N-acetyl-alpha,gamma-diaminobutyric acid (ADABA) to ectoine (1,4,5,6-tetrahydro-2-methyl-4-pyrimidine carboxylic acid), which is an excellent osmoprotectant. The polypeptide is L-ectoine synthase (Saccharophagus degradans (strain 2-40 / ATCC 43961 / DSM 17024)).